A 318-amino-acid chain; its full sequence is Glutathione synthetase (318 aa).

One can recognise an ATP-grasp domain in the interval 133-317 (KMYALQFTSV…LGQQVMAWLF (185 aa)). Position 159–215 (159–215 (VQQQGMAVLKPLGGKGGEGILFLQAGDRNLNSMIEISTQRGQLPVMLQEYLPAAKEG)) interacts with ATP. Residues E288 and N290 each coordinate Mg(2+).

It belongs to the prokaryotic GSH synthase family. The cofactor is Mg(2+). Mn(2+) is required as a cofactor.

It carries out the reaction gamma-L-glutamyl-L-cysteine + glycine + ATP = glutathione + ADP + phosphate + H(+). Its pathway is sulfur metabolism; glutathione biosynthesis; glutathione from L-cysteine and L-glutamate: step 2/2. This is Glutathione synthetase from Thermosynechococcus vestitus (strain NIES-2133 / IAM M-273 / BP-1).